The chain runs to 269 residues: Novel plant SNARE 13 (269 aa).

Over 1–217 the chain is Cytoplasmic; that stretch reads MASNLPMSPQ…IGRQVATDKC (217 aa). Positions 33–94 form a coiled coil; the sequence is DKIKDSTRQS…KQSMIKELNS (62 aa). A Phosphoserine modification is found at Ser-74. Residues 146 to 208 form the t-SNARE coiled-coil homology domain; that stretch reads MKRMDETDQA…KKASQLVKEI (63 aa). The helical; Anchor for type IV membrane protein transmembrane segment at 218-238 threads the bilayer; sequence IMGFLFLIVCGVVAIIIVKIV. Residues 239–269 are Vesicular-facing; sequence NPNNKDIRDIPGLAPPAQSRKLLYLRNQDYM.

This sequence belongs to the novel plant SNARE family.

Its subcellular location is the membrane. Its function is as follows. Vesicle trafficking protein that functions in the secretory pathway. The sequence is that of Novel plant SNARE 13 (NPSN13) from Arabidopsis thaliana (Mouse-ear cress).